A 287-amino-acid polypeptide reads, in one-letter code: Ribosomal RNA-processing protein 8 (287 aa).

The tract at residues 1-62 is disordered; it reads MTTEENKTSR…SAPSKRPKPS (62 aa). Residues 9-21 show a composition bias toward basic residues; that stretch reads SRNRKRKRQRNPK. Over residues 35–46 the composition is skewed to basic and acidic residues; sequence QNEKKNQRDTKN. S-adenosyl-L-methionine is bound by residues His107, Gly142, Asp160, Asp172, Met173, and Cys189.

This sequence belongs to the methyltransferase superfamily. RRP8 family.

It is found in the nucleus. Its subcellular location is the nucleolus. Its function is as follows. Probable methyltransferase required to silence rDNA. The sequence is that of Ribosomal RNA-processing protein 8 from Arabidopsis thaliana (Mouse-ear cress).